A 268-amino-acid chain; its full sequence is Probable ribosomal RNA small subunit methyltransferase A (268 aa).

Residues histidine 23, leucine 25, glycine 50, glutamate 71, aspartate 95, and asparagine 110 each coordinate S-adenosyl-L-methionine.

The protein belongs to the class I-like SAM-binding methyltransferase superfamily. rRNA adenine N(6)-methyltransferase family. RsmA subfamily.

It localises to the cytoplasm. Its function is as follows. Specifically dimethylates two adjacent adenosines in the loop of a conserved hairpin near the 3'-end of 16S rRNA in the 30S particle. May play a critical role in biogenesis of 30S subunits. The protein is Probable ribosomal RNA small subunit methyltransferase A of Pyrococcus horikoshii (strain ATCC 700860 / DSM 12428 / JCM 9974 / NBRC 100139 / OT-3).